The sequence spans 1091 residues: Sodium/potassium exporting P-type ATPase 5 (1091 aa).

Over 1–63 (MSEGTVKENN…LGDDTKIDYK (63 aa)) the chain is Cytoplasmic. A helical membrane pass occupies residues 64 to 84 (AMVLHQVCNAMIMVLVISMAI). At 85-90 (SFAVRD) the chain is on the extracellular side. The chain crosses the membrane as a helical span at residues 91–111 (WITGGVISFVIAVNVLIGLVQ). Over 112–282 (EYKATKTMNS…TNVGTPLHRK (171 aa)) the chain is Cytoplasmic. The helical transmembrane segment at 283-303 (LSKLAVLLFWIAVLFAIIVMA) threads the bilayer. Residues 304–312 (SQKFDVDKR) lie on the Extracellular side of the membrane. The chain crosses the membrane as a helical span at residues 313 to 333 (VAIYAICVALSMIPSSLVVVL). Residues 334 to 815 (TITMSVGAAV…RRMTDNIQKF (482 aa)) are Cytoplasmic-facing. The active-site 4-aspartylphosphate intermediate is the Asp-369. Residues Asp-369 and Thr-371 each coordinate Mg(2+). ATP is bound by residues Thr-371 and Glu-483. The disordered stretch occupies residues 499–525 (ALTGEKSTNQSNENDQSSLSQHNEKPG). A compositionally biased stretch (polar residues) spans 503–519 (EKSTNQSNENDQSSLSQ). Residues Lys-561, Arg-606, Thr-673, Gly-674, Asp-675, Arg-732, and Lys-738 each coordinate ATP. Asp-757 is a Mg(2+) binding site. Asn-760 provides a ligand contact to ATP. Residues 816–836 (VLQLLAENVAQALYLIIGLVF) traverse the membrane as a helical segment. The Extracellular portion of the chain corresponds to 837–848 (RDENGKSVFPLS). A helical membrane pass occupies residues 849 to 869 (PVEVLWIIVVTSCFPAMGLGL). At 870 to 885 (EKAAPDLMDRPPNDSE) the chain is on the cytoplasmic side. Residues 886 to 906 (VGIFTWEVIIDTFAYGIIMTG) traverse the membrane as a helical segment. The Extracellular segment spans residues 907-943 (SCMASFTGSLYGINSGRLGHDCDGTYNSSCRDVYRSR). The helical transmembrane segment at 944–964 (SAAFATMTWCALILAWEVVDM) threads the bilayer. Over 965–991 (RRSFFRMHPDTDSPVKEFFRSIWGNQF) the chain is Cytoplasmic. The helical transmembrane segment at 992–1012 (LFWSIIFGFVSAFPVVYIPVI) threads the bilayer. Over 1013 to 1021 (NDKVFLHKP) the chain is Extracellular. The chain crosses the membrane as a helical span at residues 1022 to 1042 (IGAEWGLAIAFTIAFWIGAEL). Residues 1043–1091 (YKCGKRRYFKTQRAHNSENDLERSSKHDPFEAYSTSTTLQSEINISVKH) lie on the Cytoplasmic side of the membrane.

It belongs to the cation transport ATPase (P-type) (TC 3.A.3) family. Type IID subfamily. It depends on Mg(2+) as a cofactor. The active site is phosphorylated in presence of sodium or potassium and in conditions of higher pH. Not phosphorylated in presence of calcium ions.

It is found in the cell membrane. It carries out the reaction Na(+)(in) + ATP + H2O = Na(+)(out) + ADP + phosphate + H(+). The catalysed reaction is K(+)(in) + ATP + H2O = K(+)(out) + ADP + phosphate + H(+). Functionally, catalyzes the hydrolysis of ATP coupled with the export of sodium and potassium from the cell. May export potassium less efficiently. May transport other cations such as lithium. Sodium/potassium efflux ATPases are involved in salt tolerance and maintaining the membrane potential across the plasma membrane in high salinity (Na+) or alkaline (K+) environments. The chain is Sodium/potassium exporting P-type ATPase 5 from Saccharomyces cerevisiae (strain ATCC 204508 / S288c) (Baker's yeast).